The chain runs to 90 residues: Translation initiation factor IF-1 (90 aa).

In terms of domain architecture, S1-like spans 15-90; sequence KKQKRKKEEV…TLGRIVFRHK (76 aa).

It belongs to the IF-1 family. As to quaternary structure, component of the 30S ribosomal translation pre-initiation complex which assembles on the 30S ribosome in the order IF-2 and IF-3, IF-1 and N-formylmethionyl-tRNA(fMet); mRNA recruitment can occur at any time during PIC assembly.

Its subcellular location is the cytoplasm. Its function is as follows. One of the essential components for the initiation of protein synthesis. Stabilizes the binding of IF-2 and IF-3 on the 30S subunit to which N-formylmethionyl-tRNA(fMet) subsequently binds. Helps modulate mRNA selection, yielding the 30S pre-initiation complex (PIC). Upon addition of the 50S ribosomal subunit IF-1, IF-2 and IF-3 are released leaving the mature 70S translation initiation complex. The chain is Translation initiation factor IF-1 from Mycoplasma sp.